The primary structure comprises 233 residues: Adenosine 5'-phosphosulfate reductase 1 (233 aa).

Residues cysteine 120, cysteine 121, cysteine 203, and cysteine 206 each coordinate [4Fe-4S] cluster. Catalysis depends on cysteine 229, which acts as the Nucleophile; cysteine thiosulfonate intermediate.

Belongs to the PAPS reductase family. CysH subfamily. [4Fe-4S] cluster serves as cofactor.

The protein resides in the cytoplasm. It carries out the reaction [thioredoxin]-disulfide + sulfite + AMP + 2 H(+) = adenosine 5'-phosphosulfate + [thioredoxin]-dithiol. It participates in sulfur metabolism; hydrogen sulfide biosynthesis; sulfite from sulfate. Its function is as follows. Catalyzes the formation of sulfite from adenosine 5'-phosphosulfate (APS) using thioredoxin as an electron donor. The sequence is that of Adenosine 5'-phosphosulfate reductase 1 (cysH) from Bacillus subtilis (strain 168).